Reading from the N-terminus, the 345-residue chain is MRFIDEASITVISGKGGPGCVSFRRERFIERGGPNGGDGGKGGSVIFETDPAKRTLFDLRRQKIIRAKNGMPGLGSNKHGKNGVDLIIPVPPGTLVTDQETGAVLFDLTEPGTRITIAKGGRGGQGNKRFATSTHKAPRFAQPGMPGEEFHLKLELKLLADVGIVGLPNAGKSTLISKISSARPRIADYPFTTLTPSLGMVIPDFGEPFAVADIPGIIEGAHEGTGLGIQFLKHVERTGILIHLIDVSQIEPDNPLDAFNLINTELSLYSATLAKKPQLVVLNKIDLTGSMEKVEQFKKAYGTGELLTLSAATGEGTAKLIQILARQIAEHKPLERKSETDHGNK.

An Obg domain is found at 1 to 159 (MRFIDEASIT…FHLKLELKLL (159 aa)). The OBG-type G domain maps to 160 to 329 (ADVGIVGLPN…LIQILARQIA (170 aa)). GTP-binding positions include 166-173 (GLPNAGKS), 191-195 (FTTLT), 213-216 (DIPG), 283-286 (NKID), and 310-312 (SAA). Residues serine 173 and threonine 193 each contribute to the Mg(2+) site.

It belongs to the TRAFAC class OBG-HflX-like GTPase superfamily. OBG GTPase family. In terms of assembly, monomer. The cofactor is Mg(2+).

It is found in the cytoplasm. In terms of biological role, an essential GTPase which binds GTP, GDP and possibly (p)ppGpp with moderate affinity, with high nucleotide exchange rates and a fairly low GTP hydrolysis rate. Plays a role in control of the cell cycle, stress response, ribosome biogenesis and in those bacteria that undergo differentiation, in morphogenesis control. The protein is GTPase Obg of Desulforapulum autotrophicum (strain ATCC 43914 / DSM 3382 / VKM B-1955 / HRM2) (Desulfobacterium autotrophicum).